A 453-amino-acid chain; its full sequence is Serine/threonine-protein phosphatase 2A 55 kDa regulatory subunit B delta isoform (453 aa).

WD repeat units lie at residues 32-71, 97-138, 181-219, and 230-270; these read AEAD…KSRP, EIEE…KRAE, AHTY…RSFN, and ELTE…LCDR. Phosphoserine is present on serine 285. WD repeat units follow at residues 289 to 327, 344 to 385, and 420 to 452; these read EIIS…RPVE, ENDC…DVTL, and DFNK…QDKI. Tyrosine 305 is subject to Phosphotyrosine. The residue at position 308 (threonine 308) is a Phosphothreonine.

This sequence belongs to the phosphatase 2A regulatory subunit B family. As to quaternary structure, PP2A consists of a common heterodimeric core enzyme, composed of a 36 kDa catalytic subunit (subunit C) and a 65 kDa constant regulatory subunit (PR65 or subunit A), that associates with a variety of regulatory subunits. Proteins that associate with the core dimer include three families of regulatory subunits B (the R2/B/PR55/B55, R3/B''/PR72/PR130/PR59 and R5/B'/B56 families), the 48 kDa variable regulatory subunit, viral proteins, and cell signaling molecules. Interacts with ENSA (when phosphorylated at 'Ser-67') and ARPP19 (when phosphorylated at 'Ser-62'), leading to inhibit PP2A activity. Interacts with IER5.

It localises to the cytoplasm. Its function is as follows. Substrate-recognition subunit of protein phosphatase 2A (PP2A) that plays a key role in cell cycle by controlling mitosis entry and exit. Involved in chromosome clustering during late mitosis by mediating dephosphorylation of MKI67. The activity of PP2A complexes containing PPP2R2D (PR55-delta) fluctuate during the cell cycle: the activity is high in interphase and low in mitosis. The polypeptide is Serine/threonine-protein phosphatase 2A 55 kDa regulatory subunit B delta isoform (PPP2R2D) (Homo sapiens (Human)).